The following is a 264-amino-acid chain: Somatomedin-B and thrombospondin type-1 domain-containing protein (264 aa).

The first 20 residues, 1–20 (MRTLWMALCALSRLWPGAQA), serve as a signal peptide directing secretion. The SMB domain maps to 24-75 (EAGRCCPGRDPACFARGWRLDRVYGTCFCDQACRFTGDCCFDYDRACPARPC). Intrachain disulfides connect cysteine 28-cysteine 36, cysteine 28-cysteine 52, cysteine 36-cysteine 70, cysteine 50-cysteine 52, cysteine 50-cysteine 63, cysteine 56-cysteine 62, and cysteine 63-cysteine 70. One can recognise a TSP type-1 domain in the interval 74-127 (PCFVGEWSPWSGCADQCKPTTRVRRRSVQQEPQNGGAPCPPLEERAGCLEYSTP). Asparagine 227 carries N-linked (GlcNAc...) asparagine glycosylation.

Belongs to the thrombospondin family. Detected in aorta extracellular matrix (at protein level).

The protein resides in the secreted. It is found in the extracellular space. The protein localises to the extracellular matrix. This chain is Somatomedin-B and thrombospondin type-1 domain-containing protein (SBSPON), found in Homo sapiens (Human).